The sequence spans 138 residues: Small ribosomal subunit protein uS11 (138 aa).

The span at 1-12 (MAKQSAKGSTTT) shows a compositional bias: polar residues. The interval 1–37 (MAKQSAKGSTTTKRQRGKRREKKNVPRGQAHIQSTFN) is disordered. The segment covering 13-22 (KRQRGKRREK) has biased composition (basic residues).

It belongs to the universal ribosomal protein uS11 family. Part of the 30S ribosomal subunit. Interacts with proteins S7 and S18. Binds to IF-3.

Located on the platform of the 30S subunit, it bridges several disparate RNA helices of the 16S rRNA. Forms part of the Shine-Dalgarno cleft in the 70S ribosome. The sequence is that of Small ribosomal subunit protein uS11 from Roseiflexus castenholzii (strain DSM 13941 / HLO8).